We begin with the raw amino-acid sequence, 264 residues long: Cercarial protease (264 aa).

The N-terminal stretch at 1-19 (MSNRWRFVVVVTLFTYCLT) is a signal peptide. Residues 20–27 (FERVSTWL) constitute a propeptide that is removed on maturation. One can recognise a Peptidase S1 domain in the interval 28–264 (IRSGEPVQHP…RMLDFVRSNI (237 aa)). Cysteine 53 and cysteine 69 are disulfide-bonded. Catalysis depends on charge relay system residues histidine 68 and aspartate 126. Cysteine 192 and cysteine 202 are oxidised to a cystine. The active-site Charge relay system is the serine 218.

Belongs to the peptidase S1 family. In terms of tissue distribution, acetabular (penetration) glands.

Its activity is regulated as follows. Activated by an autocatalytic mechanism. In terms of biological role, this protease cleaves elastin and thus facilitates penetration of schistosome parasite larvae through elastin-rich tissue of the host. This Schistosoma mansoni (Blood fluke) protein is Cercarial protease.